We begin with the raw amino-acid sequence, 329 residues long: Calponin-3 (329 aa).

Lys-23 bears the N6-acetyllysine mark. The Calponin-homology (CH) domain occupies 26 to 130 (HQAEEDLRNW…TLVALAGLAK (105 aa)). At Lys-158 the chain carries N6-methyllysine. Calponin-like repeat units lie at residues 164–189 (IGLQMGTNKCASQAGMTAYGTRRHLY), 204–229 (ISLQMGTNKGASQAGMLAPGTRRDIY), and 243–268 (ISLQMGTNKVASQKGMSVYGLGRQVY). The tract at residues 280-329 (VIHNGSQGTGTNGSEISDSDYQAEYPDEYHGEYQDDYPRDYQYGDQGIDY) is disordered. The segment covering 306 to 318 (DEYHGEYQDDYPR) has biased composition (basic and acidic residues).

It belongs to the calponin family.

Thin filament-associated protein that is implicated in the regulation and modulation of smooth muscle contraction. It is capable of binding to actin, calmodulin and tropomyosin. The interaction of calponin with actin inhibits the actomyosin Mg-ATPase activity. The chain is Calponin-3 (CNN3) from Bos taurus (Bovine).